The sequence spans 316 residues: 4-hydroxyphenylacetate decarboxylase activating enzyme (316 aa).

The 288-residue stretch at 20 to 307 (HDGPGCRTTV…QDIFLDNGIA (288 aa)) folds into the Radical SAM core domain. The [4Fe-4S] cluster site is built by C34, C38, C41, C60, C66, C69, and C105. S-adenosyl-L-methionine is bound at residue 40 to 42 (WCA). Residues 84 to 115 (NKPVIDWNICKDCESFECVNSCYYNAFKLCAK) form the 4Fe-4S ferredoxin-type domain. S-adenosyl-L-methionine contacts are provided by residues G144, 193–195 (DIK), and H267.

It belongs to the organic radical-activating enzymes family. Monomer. Requires [4Fe-4S] cluster as cofactor.

The catalysed reaction is glycyl-[protein] + reduced [flavodoxin] + S-adenosyl-L-methionine = glycin-2-yl radical-[protein] + semiquinone [flavodoxin] + 5'-deoxyadenosine + L-methionine + H(+). In terms of biological role, catalyzes activation of 4-hydroxyphenylacetate decarboxylase under anaerobic conditions by generation of an organic free radical on a glycine residue, via a homolytic cleavage of S-adenosyl-L-methionine (SAM). The chain is 4-hydroxyphenylacetate decarboxylase activating enzyme from Clostridioides difficile (strain CD196) (Peptoclostridium difficile).